A 171-amino-acid chain; its full sequence is Flavodoxin (171 aa).

Residues 4–165 (IGIFFGSDTG…RIKQWVKQII (162 aa)) enclose the Flavodoxin-like domain.

The protein belongs to the flavodoxin family. FMN serves as cofactor.

Low-potential electron donor to a number of redox enzymes. This Buchnera aphidicola subsp. Acyrthosiphon pisum (strain APS) (Acyrthosiphon pisum symbiotic bacterium) protein is Flavodoxin (fldA).